A 681-amino-acid chain; its full sequence is Proline-rich receptor-like protein kinase PERK8 (681 aa).

The span at Met1–Ser11 shows a compositional bias: pro residues. The disordered stretch occupies residues Met1 to Ser231. At Met1–Gly237 the chain is on the extracellular side. An N-linked (GlcNAc...) asparagine glycan is attached at Asn16. Residues Ala21–Pro163 are compositionally biased toward pro residues. Residues Thr177–Thr191 are compositionally biased toward low complexity. Positions Leu192–Val201 are enriched in pro residues. Residues Pro214 to Gly229 show a composition bias toward polar residues. A glycan (N-linked (GlcNAc...) asparagine) is linked at Asn220. A helical membrane pass occupies residues Ile238–Trp258. The Cytoplasmic segment spans residues Phe259–Pro681. The region spanning Phe339 to Leu617 is the Protein kinase domain. ATP-binding positions include Leu345–Val353 and Lys367. Tyr412 is modified (phosphotyrosine). Asp463 functions as the Proton acceptor in the catalytic mechanism. Phosphoserine is present on residues Ser467 and Ser498. Residues Thr499 and Thr504 each carry the phosphothreonine modification. The residue at position 512 (Tyr512) is a Phosphotyrosine.

It belongs to the protein kinase superfamily. Ser/Thr protein kinase family. Interacts with KIPK1 and KIPK2 (via its cytosolic domain). Mostly expressed in seedlings, roots, inflorescence bolts and flower buds.

Its subcellular location is the cell membrane. The enzyme catalyses L-seryl-[protein] + ATP = O-phospho-L-seryl-[protein] + ADP + H(+). It catalyses the reaction L-threonyl-[protein] + ATP = O-phospho-L-threonyl-[protein] + ADP + H(+). In terms of biological role, could be involved in the negative regulation of root growth. This Arabidopsis thaliana (Mouse-ear cress) protein is Proline-rich receptor-like protein kinase PERK8 (PERK8).